Here is a 182-residue protein sequence, read N- to C-terminus: Sec-independent protein translocase protein TatB (182 aa).

Residues 1–21 (MFDIGFSELLLVFVIGLIVLG) traverse the membrane as a helical segment. 2 disordered regions span residues 87–107 (QAAESMKRTYSANDPEQASDE) and 121–182 (TQHE…SDKP). A compositionally biased stretch (low complexity) spans 168-182 (AAPVVESSPSSSDKP).

The protein belongs to the TatB family. As to quaternary structure, the Tat system comprises two distinct complexes: a TatABC complex, containing multiple copies of TatA, TatB and TatC subunits, and a separate TatA complex, containing only TatA subunits. Substrates initially bind to the TatABC complex, which probably triggers association of the separate TatA complex to form the active translocon.

Its subcellular location is the cell inner membrane. Its function is as follows. Part of the twin-arginine translocation (Tat) system that transports large folded proteins containing a characteristic twin-arginine motif in their signal peptide across membranes. Together with TatC, TatB is part of a receptor directly interacting with Tat signal peptides. TatB may form an oligomeric binding site that transiently accommodates folded Tat precursor proteins before their translocation. In Salmonella choleraesuis (strain SC-B67), this protein is Sec-independent protein translocase protein TatB.